A 118-amino-acid chain; its full sequence is uncharacterized protein (118 aa).

3 helical membrane passes run isoleucine 6–valine 26, alanine 43–leucine 63, and isoleucine 84–glutamine 104.

Belongs to the AzlD/HI_1737/HP1330 family.

It localises to the cell membrane. This is an uncharacterized protein from Helicobacter pylori (strain J99 / ATCC 700824) (Campylobacter pylori J99).